The chain runs to 247 residues: C-type lectin domain family 7 member A (247 aa).

Residues 1 to 44 (MEYHPDLENLDEDGYTQLHFDSRSNTRIAVVSEKGSCVASPPWR) lie on the Cytoplasmic side of the membrane. The ITAM-like signature appears at 15–18 (YTQL). The helical; Signal-anchor for type II membrane protein transmembrane segment at 45-65 (LIAVILGILCLVILVIAVVLG) threads the bilayer. Residues 66–247 (TMAIWRPNSG…CSICEKKFSM (182 aa)) lie on the Extracellular side of the membrane. The disordered stretch occupies residues 81 to 105 (NGYFPSRNKENHSQPTQSPLEESVT). N91 carries an N-linked (GlcNAc...) asparagine glycan. The span at 93–105 (SQPTQSPLEESVT) shows a compositional bias: polar residues. 3 disulfides stabilise this stretch: C120–C131, C148–C241, and C220–C233. The C-type lectin domain maps to 127–242 (YEKSCYLFSP…CSVPSCSICE (116 aa)). 146–153 (RQCSQLGS) is a (1,3-beta-D-glucosyl)n binding site. Positions 157, 159, and 163 each coordinate a divalent metal cation. E195 is a binding site for (1,3-beta-D-glucosyl)n. E242 lines the a divalent metal cation pocket.

In terms of assembly, homodimer. Interacts with SYK; participates in leukocyte activation in presence of fungal pathogens. Interacts with CD37; this interaction controls CLEC7A-mediated IL-6 production. In terms of processing, phosphorylated on tyrosine residues in response to beta-glucan binding. In terms of tissue distribution, detected in dendritic cells, in paracortical and medullary regions of lymph nodes, and in spleen red pulp and white pulp.

It is found in the cell membrane. Functionally, lectin that functions as a pattern recognizing receptor (PRR) specific for beta-1,3-linked and beta-1,6-linked glucans, which constitute cell wall constituents from pathogenic bacteria and fungi. Necessary for the TLR2-mediated inflammatory response and activation of NF-kappa-B: upon beta-glucan binding, recruits SYK via its ITAM motif and promotes a signaling cascade that activates some CARD domain-BCL10-MALT1 (CBM) signalosomes, leading to the activation of NF-kappa-B and MAP kinase p38 (MAPK11, MAPK12, MAPK13 and/or MAPK14) pathways which stimulate expression of genes encoding pro-inflammatory cytokines and chemokines. Enhances cytokine production in macrophages and dendritic cells. Mediates production of reactive oxygen species in the cell. Mediates phagocytosis of C.albicans conidia. Binds T-cells in a way that does not involve their surface glycans and plays a role in T-cell activation. Stimulates T-cell proliferation. Induces phosphorylation of SCIMP after binding beta-glucans. The protein is C-type lectin domain family 7 member A (CLEC7A) of Macaca mulatta (Rhesus macaque).